Reading from the N-terminus, the 737-residue chain is Elongation factor 2 (737 aa).

One can recognise a tr-type G domain in the interval 18–262; the sequence is TRVRNIGIIA…TVIKFVPNPR (245 aa). GTP-binding positions include 27-34, 93-97, and 147-150; these read AHVDHGKT, DTPGH, and NKVD. His-604 carries the post-translational modification Diphthamide.

It belongs to the TRAFAC class translation factor GTPase superfamily. Classic translation factor GTPase family. EF-G/EF-2 subfamily.

It is found in the cytoplasm. In terms of biological role, catalyzes the GTP-dependent ribosomal translocation step during translation elongation. During this step, the ribosome changes from the pre-translocational (PRE) to the post-translocational (POST) state as the newly formed A-site-bound peptidyl-tRNA and P-site-bound deacylated tRNA move to the P and E sites, respectively. Catalyzes the coordinated movement of the two tRNA molecules, the mRNA and conformational changes in the ribosome. The protein is Elongation factor 2 (fusA) of Sulfurisphaera tokodaii (strain DSM 16993 / JCM 10545 / NBRC 100140 / 7) (Sulfolobus tokodaii).